Reading from the N-terminus, the 248-residue chain is ATP synthase subunit a (248 aa).

Transmembrane regions (helical) follow at residues 34–54 (TNVT…LVAG), 91–111 (YFPY…LGLI), 121–141 (IAVT…IGFV), 147–167 (FLSL…LAVI), 197–217 (FAGF…VMAI), and 220–240 (LEVL…CVYL).

Belongs to the ATPase A chain family. As to quaternary structure, F-type ATPases have 2 components, CF(1) - the catalytic core - and CF(0) - the membrane proton channel. CF(1) has five subunits: alpha(3), beta(3), gamma(1), delta(1), epsilon(1). CF(0) has four main subunits: a, b, b' and c.

Its subcellular location is the cell inner membrane. Its function is as follows. Key component of the proton channel; it plays a direct role in the translocation of protons across the membrane. The sequence is that of ATP synthase subunit a from Dinoroseobacter shibae (strain DSM 16493 / NCIMB 14021 / DFL 12).